Reading from the N-terminus, the 315-residue chain is Transaldolase (315 aa).

The active-site Schiff-base intermediate with substrate is Lys131.

This sequence belongs to the transaldolase family. Type 1 subfamily. Homodimer.

Its subcellular location is the cytoplasm. The catalysed reaction is D-sedoheptulose 7-phosphate + D-glyceraldehyde 3-phosphate = D-erythrose 4-phosphate + beta-D-fructose 6-phosphate. It participates in carbohydrate degradation; pentose phosphate pathway; D-glyceraldehyde 3-phosphate and beta-D-fructose 6-phosphate from D-ribose 5-phosphate and D-xylulose 5-phosphate (non-oxidative stage): step 2/3. Functionally, transaldolase is important for the balance of metabolites in the pentose-phosphate pathway. The protein is Transaldolase of Actinobacillus pleuropneumoniae serotype 3 (strain JL03).